Consider the following 140-residue polypeptide: Nucleoside diphosphate kinase (140 aa).

Residues K11, F59, R87, T93, R104, and N114 each coordinate ATP. H117 (pros-phosphohistidine intermediate) is an active-site residue.

It belongs to the NDK family. As to quaternary structure, homotetramer. Requires Mg(2+) as cofactor.

The protein localises to the cytoplasm. The catalysed reaction is a 2'-deoxyribonucleoside 5'-diphosphate + ATP = a 2'-deoxyribonucleoside 5'-triphosphate + ADP. It catalyses the reaction a ribonucleoside 5'-diphosphate + ATP = a ribonucleoside 5'-triphosphate + ADP. Major role in the synthesis of nucleoside triphosphates other than ATP. The ATP gamma phosphate is transferred to the NDP beta phosphate via a ping-pong mechanism, using a phosphorylated active-site intermediate. The sequence is that of Nucleoside diphosphate kinase from Rickettsia conorii (strain ATCC VR-613 / Malish 7).